The following is a 283-amino-acid chain: NAD kinase (283 aa).

Asp66 acts as the Proton acceptor in catalysis. NAD(+) contacts are provided by residues 66-67 (DG), 134-135 (ND), Arg145, Arg163, Asp165, and 176-181 (TAYSMS).

Belongs to the NAD kinase family. Requires a divalent metal cation as cofactor.

The protein resides in the cytoplasm. It catalyses the reaction NAD(+) + ATP = ADP + NADP(+) + H(+). In terms of biological role, involved in the regulation of the intracellular balance of NAD and NADP, and is a key enzyme in the biosynthesis of NADP. Catalyzes specifically the phosphorylation on 2'-hydroxyl of the adenosine moiety of NAD to yield NADP. This Chlorobaculum tepidum (strain ATCC 49652 / DSM 12025 / NBRC 103806 / TLS) (Chlorobium tepidum) protein is NAD kinase.